The following is a 35-amino-acid chain: Anti-H(O) lectin 3 (35 aa).

Belongs to the leguminous lectin family. In terms of assembly, homodimer. In terms of processing, highly glycosylated.

In terms of biological role, binds lactose or galactose. In Ulex europaeus (Furze), this protein is Anti-H(O) lectin 3.